The following is a 342-amino-acid chain: Heat-inducible transcription repressor HrcA (342 aa).

It belongs to the HrcA family.

In terms of biological role, negative regulator of class I heat shock genes (grpE-dnaK-dnaJ and groELS operons). Prevents heat-shock induction of these operons. The chain is Heat-inducible transcription repressor HrcA from Dechloromonas aromatica (strain RCB).